The chain runs to 197 residues: Holliday junction branch migration complex subunit RuvA (197 aa).

The segment at 1-63 (MIALLNGQLI…EDALLLFGFL (63 aa)) is domain I. Residues 64–142 (TETEKDLFGL…PVQAVPGNAP (79 aa)) form a domain II region. The tract at residues 142-146 (PLPAE) is flexible linker. Residues 147-197 (TAGDLREDALSALVNLGYKENLSRKALDGIDTAPDAPLEDILKQALKLLMR) form a domain III region.

It belongs to the RuvA family. As to quaternary structure, homotetramer. Forms an RuvA(8)-RuvB(12)-Holliday junction (HJ) complex. HJ DNA is sandwiched between 2 RuvA tetramers; dsDNA enters through RuvA and exits via RuvB. An RuvB hexamer assembles on each DNA strand where it exits the tetramer. Each RuvB hexamer is contacted by two RuvA subunits (via domain III) on 2 adjacent RuvB subunits; this complex drives branch migration. In the full resolvosome a probable DNA-RuvA(4)-RuvB(12)-RuvC(2) complex forms which resolves the HJ.

The protein localises to the cytoplasm. The RuvA-RuvB-RuvC complex processes Holliday junction (HJ) DNA during genetic recombination and DNA repair, while the RuvA-RuvB complex plays an important role in the rescue of blocked DNA replication forks via replication fork reversal (RFR). RuvA specifically binds to HJ cruciform DNA, conferring on it an open structure. The RuvB hexamer acts as an ATP-dependent pump, pulling dsDNA into and through the RuvAB complex. HJ branch migration allows RuvC to scan DNA until it finds its consensus sequence, where it cleaves and resolves the cruciform DNA. The polypeptide is Holliday junction branch migration complex subunit RuvA (Syntrophotalea carbinolica (strain DSM 2380 / NBRC 103641 / GraBd1) (Pelobacter carbinolicus)).